Here is a 1112-residue protein sequence, read N- to C-terminus: Electrogenic sodium bicarbonate cotransporter 4 (1112 aa).

Basic and acidic residues predominate over residues 1 to 13 (MKVEEKAGVKKLE). 3 disordered regions span residues 1-80 (MKVE…SSLG), 220-255 (KKPIHRSLADIGKSVSTTNRSSARSPSAGPTLHHST), and 439-469 (GRSGASAGGGGSGGGAGGSGAGGGGSGNEAE). The Cytoplasmic segment spans residues 1–513 (MKVEEKAGVK…DFYDGFHIQS (513 aa)). Polar residues-rich tracts occupy residues 53–67 (QRVQWSLQPDKSQQD) and 233–244 (SVSTTNRSSARS). The span at 444–465 (SAGGGGSGGGAGGSGAGGGGSG) shows a compositional bias: gly residues. Residues 514–536 (ISAVLFIYLGCITNAITFGGLLG) form a helical membrane-spanning segment. The Extracellular portion of the chain corresponds to 537 to 547 (DATDNYQGVME). The chain crosses the membrane as a helical span at residues 548 to 579 (SFLGTAMAGSLFCLFSGQPLIILSSTGPILIF). The Cytoplasmic segment spans residues 580–598 (EKLLFDFSKANGLDYMEFR). A helical transmembrane segment spans residues 599–620 (LWIGLHSAIQCLILVATDASFI). Residues 621–734 (IKYITRFTEE…LGSSCQFVPD (114 aa)) lie on the Extracellular side of the membrane. The chain crosses the membrane as a helical span at residues 735 to 753 (LALMSFILFFGTYSMTLTL). The Cytoplasmic portion of the chain corresponds to 754–772 (KKFKFSRYFPTKVRTLVAD). The chain crosses the membrane as a helical span at residues 773 to 792 (FSIVFSILLFCGIDACFGLQ). Topologically, residues 793–820 (TPKLHVPNVIKPTRPDRGWFVAPFGKNP) are extracellular. Residues 821–839 (WWVYPASILPALLVTILIF) form a helical membrane-spanning segment. At 840–858 (MDQQITAVIVNRKENKLRK) the chain is on the cytoplasmic side. A helical membrane pass occupies residues 859-875 (AAGYHLDLFWVGILMAL). Residues 876–880 (CSFMG) lie on the Extracellular side of the membrane. A helical membrane pass occupies residues 881–900 (LPWYVAATVISIAHIDSLKM). The Cytoplasmic segment spans residues 901–920 (ETETSAPGEQPQFLGVREQR). The helical transmembrane segment at 921 to 940 (VTGVMVFILTGISVFLAPIL) threads the bilayer. Topologically, residues 941 to 945 (KYIPM) are extracellular. Residues 946–966 (PVLYGVFLYMGVASLNGIQFW) form a helical membrane-spanning segment. The Cytoplasmic portion of the chain corresponds to 967–992 (DRCKLFLMPAKHQPDHAFLRHVPLRR). A helical transmembrane segment spans residues 993-1010 (IHLFTLVQILCLALLWIL). At 1011 to 1015 (KSTMA) the chain is on the extracellular side. The helical transmembrane segment at 1016–1033 (AIIFPVMILGLIIVRRLL) threads the bilayer. The Cytoplasmic segment spans residues 1034 to 1112 (DLIFSQHDLA…KRSSSWSHSL (79 aa)). The span at 1055–1074 (KESDRKKRRKEVHENTDKEP) shows a compositional bias: basic and acidic residues. The segment at 1055 to 1112 (KESDRKKRRKEVHENTDKEPQFLPPSVVKIPMEGIPSDPQNGIHCVGRKRSSSWSHSL) is disordered.

It belongs to the anion exchanger (TC 2.A.31) family. In terms of tissue distribution, observed in hepatocytes and in the apical region of bile duct intrahepatic cholangiocytes of liver. Also observed in uroepithelium cells lining the outer pelvic wall of the kidney (at protein level). Highly expressed in colon, distal colon, liver, kidney and testis. Moderate expression in duodenum and stomach and weak expression in heart. In kidney, very weakly expressed in the inner medulla, but abundantly expressed in cortex and outer medulla in the medullary thick ascending and cortical thick ascending limbs of the loop of Henle.

The protein resides in the basolateral cell membrane. Its subcellular location is the apical cell membrane. The catalysed reaction is 2 hydrogencarbonate(out) + Na(+)(out) = 2 hydrogencarbonate(in) + Na(+)(in). The enzyme catalyses 3 hydrogencarbonate(out) + Na(+)(out) = 3 hydrogencarbonate(in) + Na(+)(in). In terms of biological role, mediates sodium- and bicarbonate-dependent electrogenic sodium bicarbonate cotransport, with a Na(+):HCO3(-) stoichiometry varying from 1:2 to 1:3. This is Electrogenic sodium bicarbonate cotransporter 4 from Rattus norvegicus (Rat).